Consider the following 636-residue polypeptide: MSHRIRHLSCLACRRKKVKCNRQYPCTRCLKYGEACTYDERDNRKKRHSLSYLHSLESQLARLESFIMTLKNSDPEGRDEMLKSVVFSDHLTEPNDQEVKSEGPIEYPVFLNVQDSKTVSFYGPTSAYDLSLPDITKDNKTTWNFQASYSPMVSECLKLFFRYQYSQFLFVYRESFLSDYYYNFHDGFYCTEHLIYAICAIGASMSDDENISRHSKSYYDASWQKLLEFGLDRSHLTSVQCLLCLGYYDIGMGNTSLGWLLSGLAFRMGQDLGFQLNPENWYIDNSPAISSADSDIRRRVFWGSYVADKFIGFIMGRPTMLKRSDASIPGSNQLPEFAGLEEFKLNVTDYMSLTDFSVCDAVALFVDLSDIADSILLNMFSPTSKNRATNINCVLSNLGKYNLELMNWHYKLPDTISWRTIDLKKDRIPNLCAVSLYYHLIRICLNRPFLSRKEVTANDLTPKTICTDSINEIVTVIRAHRTANGLRYSTLYIVYAAIVSCSVILLLRDMCTDSELLTLNNDMMFFIEVLKECSQTWKLAQRSIVLIENTLKGKTNSQSTSEFVSPISDTENGSSSQQVSEAKDIVEPSDVLDELQKFDLLPENDDNFQTFQAFYGGPPIILSPNLYEKKLNEKTL.

A DNA-binding region (zn(2)-C6 fungal-type) is located at residues 10–36 (CLACRRKKVKCNRQYPCTRCLKYGEAC). Over residues 556–580 (NSQSTSEFVSPISDTENGSSSQQVS) the composition is skewed to polar residues. The interval 556–581 (NSQSTSEFVSPISDTENGSSSQQVSE) is disordered.

Its subcellular location is the cytoplasm. It is found in the nucleus. This is an uncharacterized protein from Schizosaccharomyces pombe (strain 972 / ATCC 24843) (Fission yeast).